The primary structure comprises 649 residues: Echinoderm microtubule-associated protein-like 2 (649 aa).

A tandem atypical propeller in EMLs region spans residues 10 to 649 (KEVIFSMEEG…DTSVLQWRVA (640 aa)). WD repeat units lie at residues 56–93 (KLDW…LYSV), 97–144 (RQRH…VWDS), 151–192 (HVLG…VWDW), 195–234 (ESKV…FWSL), 241–280 (KRQG…VWGK), 285–323 (ITQE…LWGS), 369–406 (FSLL…LWSS), 410–447 (QPVW…LLDT), 452–489 (LVAI…VYTV), 495–535 (KVSR…YWDP), 564–602 (FGIW…LFSY), and 609–648 (ALSH…QWRV). The stretch at 65–106 (GRDCRANLYLLPTGEVVYFVASVAVLYSVEEQRQRHYLGHND) forms a coiled coil.

Belongs to the WD repeat EMAP family. In terms of assembly, interacts with GRID2 and may also interact with GRID1. Interacts with EML3. Binds unpolymerized tubulins via its WD repeat region.

It is found in the cytoplasm. It localises to the cytoskeleton. The protein resides in the spindle. Its function is as follows. Tubulin binding protein that inhibits microtubule nucleation and growth, resulting in shorter microtubules. This is Echinoderm microtubule-associated protein-like 2 (Eml2) from Mus musculus (Mouse).